A 195-amino-acid polypeptide reads, in one-letter code: Holliday junction branch migration complex subunit RuvA (195 aa).

Residues 1-62 (MIEFVKGPVA…EDQQTLYGFR (62 aa)) form a domain I region. Positions 63-141 (SRRERELFNK…ELAPDYVPNE (79 aa)) are domain II. The tract at residues 141 to 145 (EGLFA) is flexible linker. Positions 146 to 195 (QGASELDEACEALVALGYSEREIAKVRKALSGEILTTDAYIKRALQLLLK) are domain III.

Belongs to the RuvA family. As to quaternary structure, homotetramer. Forms an RuvA(8)-RuvB(12)-Holliday junction (HJ) complex. HJ DNA is sandwiched between 2 RuvA tetramers; dsDNA enters through RuvA and exits via RuvB. An RuvB hexamer assembles on each DNA strand where it exits the tetramer. Each RuvB hexamer is contacted by two RuvA subunits (via domain III) on 2 adjacent RuvB subunits; this complex drives branch migration. In the full resolvosome a probable DNA-RuvA(4)-RuvB(12)-RuvC(2) complex forms which resolves the HJ.

It is found in the cytoplasm. Functionally, the RuvA-RuvB-RuvC complex processes Holliday junction (HJ) DNA during genetic recombination and DNA repair, while the RuvA-RuvB complex plays an important role in the rescue of blocked DNA replication forks via replication fork reversal (RFR). RuvA specifically binds to HJ cruciform DNA, conferring on it an open structure. The RuvB hexamer acts as an ATP-dependent pump, pulling dsDNA into and through the RuvAB complex. HJ branch migration allows RuvC to scan DNA until it finds its consensus sequence, where it cleaves and resolves the cruciform DNA. The polypeptide is Holliday junction branch migration complex subunit RuvA (Exiguobacterium sp. (strain ATCC BAA-1283 / AT1b)).